Here is a 362-residue protein sequence, read N- to C-terminus: Hydroxycarboxylate dehydrogenase A (362 aa).

Residues Asp-173, His-257, and His-274 each contribute to the Zn(2+) site.

Belongs to the iron-containing alcohol dehydrogenase family. Requires Zn(2+) as cofactor.

The enzyme catalyses 2-hydroxybutanoate + NADP(+) = 2-oxobutanoate + NADPH + H(+). It catalyses the reaction 2-hydroxyglutarate + NADP(+) = 2-oxoglutarate + NADPH + H(+). In terms of biological role, catalyzes the NADPH-dependent reduction of 2-oxoglutarate and 2-oxobutanoate, leading to the respective 2-hydroxycarboxylate. Cannot use NADH instead of NADPH as a redox partner. Do not catalyze the reverse reactions. This is Hydroxycarboxylate dehydrogenase A from Escherichia coli (strain K12).